Reading from the N-terminus, the 300-residue chain is tRNA dimethylallyltransferase 1 (300 aa).

Residue 13 to 20 participates in ATP binding; it reads GPTGVGKT. 15-20 is a substrate binding site; sequence TGVGKT. The interval 38–41 is interaction with substrate tRNA; it reads DSRQ.

It belongs to the IPP transferase family. In terms of assembly, monomer. Mg(2+) serves as cofactor.

The catalysed reaction is adenosine(37) in tRNA + dimethylallyl diphosphate = N(6)-dimethylallyladenosine(37) in tRNA + diphosphate. Catalyzes the transfer of a dimethylallyl group onto the adenine at position 37 in tRNAs that read codons beginning with uridine, leading to the formation of N6-(dimethylallyl)adenosine (i(6)A). In Porphyromonas gingivalis (strain ATCC BAA-308 / W83), this protein is tRNA dimethylallyltransferase 1.